Consider the following 443-residue polypeptide: Ribosomal protein uS12 methylthiotransferase RimO (443 aa).

The MTTase N-terminal domain occupies 5-115 (PNIGFISLGC…VMKHVHKYVP (111 aa)). [4Fe-4S] cluster-binding residues include Cys-14, Cys-50, Cys-79, Cys-147, Cys-151, and Cys-154. The 242-residue stretch at 133–374 (LTPKHYAYLK…MQVQQRISAA (242 aa)) folds into the Radical SAM core domain. The 67-residue stretch at 377–443 (QQKVGKTLAV…ADEYDLWGTC (67 aa)) folds into the TRAM domain.

Belongs to the methylthiotransferase family. RimO subfamily. The cofactor is [4Fe-4S] cluster.

It is found in the cytoplasm. The enzyme catalyses L-aspartate(89)-[ribosomal protein uS12]-hydrogen + (sulfur carrier)-SH + AH2 + 2 S-adenosyl-L-methionine = 3-methylsulfanyl-L-aspartate(89)-[ribosomal protein uS12]-hydrogen + (sulfur carrier)-H + 5'-deoxyadenosine + L-methionine + A + S-adenosyl-L-homocysteine + 2 H(+). Functionally, catalyzes the methylthiolation of an aspartic acid residue of ribosomal protein uS12. This is Ribosomal protein uS12 methylthiotransferase RimO from Actinobacillus pleuropneumoniae serotype 5b (strain L20).